The sequence spans 226 residues: V-type proton ATPase subunit E 1 (226 aa).

Residue Ala2 is modified to N-acetylalanine. A Phosphotyrosine modification is found at Tyr56.

It belongs to the V-ATPase E subunit family. V-ATPase is a heteromultimeric enzyme made up of two complexes: the ATP-hydrolytic V1 complex and the proton translocation V0 complex. The V1 complex consists of three catalytic AB heterodimers that form a heterohexamer, three peripheral stalks each consisting of EG heterodimers, one central rotor including subunits D and F, and the regulatory subunits C and H. The proton translocation complex V0 consists of the proton transport subunit a, a ring of proteolipid subunits c9c'', rotary subunit d, subunits e and f, and the accessory subunits ATP6AP1/Ac45 and ATP6AP2/PRR. Interacts with RABL2/RABL2A; binds preferentially to GTP-bound RABL2. Interacts with ALDOC. Interacts with RAB11B. As to expression, expressed within the midpiece of sperm tail (at protein level). Kidney; localizes to early distal nephron, encompassing thick ascending limbs and distal convoluted tubules (at protein level).

It localises to the apical cell membrane. The protein localises to the cytoplasmic vesicle. It is found in the secretory vesicle. The protein resides in the synaptic vesicle membrane. Its subcellular location is the clathrin-coated vesicle membrane. Functionally, subunit of the V1 complex of vacuolar(H+)-ATPase (V-ATPase), a multisubunit enzyme composed of a peripheral complex (V1) that hydrolyzes ATP and a membrane integral complex (V0) that translocates protons. V-ATPase is responsible for acidifying and maintaining the pH of intracellular compartments and in some cell types, is targeted to the plasma membrane, where it is responsible for acidifying the extracellular environment. This chain is V-type proton ATPase subunit E 1 (Atp6v1e1), found in Mus musculus (Mouse).